The sequence spans 471 residues: MKNPKPFGVVAGFVRLHKSSLGQARYYSIPNDVSIPASKRKFIPSSGTYPKGFLVACAHAGVKESNTQFPDVALICSETPCSAAAVFTTNKFQAAPVQVSKQVLEKRQGAGIRGVVINSGCANAVTGKGGLEHAKMMSAKVDECNGTPSTGPQDTSTLVMSTGVIGQRLPIKKILDAIPTAHSNLASTHSTWLATARAICTTDTFPKLLSRPFTLPSSPNRQYCLAGMTKGAGMIHPNMATLLGILCTDVPISPSALKALLTHAVSRSFNAISIDGDTSTNDTIALLANGAAGGEAITTTSSPDYAAMQTILTSFAQSLAQLVVRDGEGATKFIMVRVCNSPSHADAKVIASTIARSPLVKTALYGKDANWGRILCAIGYAQGIAEGTVVPERTSVSFRPVDGSAELKLLVNGERKAWNESRREDLADEDLEIVLIWCRQKGEKGLGGGGGVVLVCDFSHEYVTINGDYRT.

6 residues coordinate substrate: threonine 201, lysine 230, threonine 241, glutamate 328, asparagine 466, and threonine 471. Threonine 241 (nucleophile) is an active-site residue.

Belongs to the ArgJ family. Heterodimer of an alpha and a beta chain. Post-translationally, the alpha and beta chains are autoproteolytically processed from a single precursor protein within the mitochondrion.

The protein resides in the mitochondrion matrix. It carries out the reaction N(2)-acetyl-L-ornithine + L-glutamate = N-acetyl-L-glutamate + L-ornithine. The enzyme catalyses L-glutamate + acetyl-CoA = N-acetyl-L-glutamate + CoA + H(+). Its pathway is amino-acid biosynthesis; L-arginine biosynthesis; L-ornithine and N-acetyl-L-glutamate from L-glutamate and N(2)-acetyl-L-ornithine (cyclic): step 1/1. It functions in the pathway amino-acid biosynthesis; L-arginine biosynthesis; N(2)-acetyl-L-ornithine from L-glutamate: step 1/4. Its function is as follows. Catalyzes two activities which are involved in the cyclic version of arginine biosynthesis: the synthesis of acetylglutamate from glutamate and acetyl-CoA, and of ornithine by transacetylation between acetylornithine and glutamate. This chain is Arginine biosynthesis bifunctional protein ArgJ, mitochondrial, found in Ajellomyces capsulatus (strain NAm1 / WU24) (Darling's disease fungus).